A 253-amino-acid polypeptide reads, in one-letter code: 5-oxoprolinase subunit A (253 aa).

Belongs to the LamB/PxpA family. Forms a complex composed of PxpA, PxpB and PxpC.

The enzyme catalyses 5-oxo-L-proline + ATP + 2 H2O = L-glutamate + ADP + phosphate + H(+). Its function is as follows. Catalyzes the cleavage of 5-oxoproline to form L-glutamate coupled to the hydrolysis of ATP to ADP and inorganic phosphate. The sequence is that of 5-oxoprolinase subunit A from Bacillus thuringiensis subsp. konkukian (strain 97-27).